The sequence spans 140 residues: ATP synthase epsilon chain (140 aa).

It belongs to the ATPase epsilon chain family. As to quaternary structure, F-type ATPases have 2 components, CF(1) - the catalytic core - and CF(0) - the membrane proton channel. CF(1) has five subunits: alpha(3), beta(3), gamma(1), delta(1), epsilon(1). CF(0) has three main subunits: a, b and c.

It localises to the cell inner membrane. In terms of biological role, produces ATP from ADP in the presence of a proton gradient across the membrane. This chain is ATP synthase epsilon chain, found in Xanthomonas oryzae pv. oryzae (strain PXO99A).